Reading from the N-terminus, the 165-residue chain is uncharacterized protein (165 aa).

A helical membrane pass occupies residues 16 to 36 (ASISSILNFFFFYIMEYFVAV).

It belongs to the asfivirus F165R family.

The protein localises to the host membrane. This is an uncharacterized protein from African swine fever virus (strain Badajoz 1971 Vero-adapted) (Ba71V).